Here is a 103-residue protein sequence, read N- to C-terminus: Large ribosomal subunit protein bL36m (103 aa).

Belongs to the bacterial ribosomal protein bL36 family. As to quaternary structure, component of the mitochondrial large ribosomal subunit (mt-LSU). Mature mammalian 55S mitochondrial ribosomes consist of a small (28S) and a large (39S) subunit. The 28S small subunit contains a 12S ribosomal RNA (12S mt-rRNA) and 30 different proteins. The 39S large subunit contains a 16S rRNA (16S mt-rRNA), a copy of mitochondrial valine transfer RNA (mt-tRNA(Val)), which plays an integral structural role, and 52 different proteins. bL36m has a zinc binding site.

Its subcellular location is the mitochondrion. The protein is Large ribosomal subunit protein bL36m (MRPL36) of Homo sapiens (Human).